The primary structure comprises 128 residues: uncharacterized protein (128 aa).

Disordered regions lie at residues 62–83 (LNPS…SPRV) and 101–128 (FAAS…RYQP). Residues 101 to 114 (FAASSSSTAPVTVT) show a composition bias toward low complexity.

It is found in the cytoplasm. The protein localises to the nucleus. This is an uncharacterized protein from Saccharomyces cerevisiae (strain ATCC 204508 / S288c) (Baker's yeast).